We begin with the raw amino-acid sequence, 457 residues long: MTALDSRNWGLTPAMETGLFQKPQDRIFIIELENSIVSFINSNTESFQLRPMNSYYRLLSHQIAEYHNLNHVLARTQDSCVILFKGENFQKIEGKPLLQELQLNKKPEECASSSESIEKSNNNRIFRILKRKEVGNECDYKIDGNTRTPNSNLTANSNKDQKIEIDDKSSTDLEQERIEKERLYEQRKQEIFDKLNKSEDDVKSTNSSGSSDSDNEWSDWLNGDDSNTQTSNGSVSSSSPFNSSVTTIQVNKPQQQFYDSRRGRGGRRRGTNNYKDAYRGQSRRNKENGGYQSGYSSPYLVYPPPQMGGNSLPTYPLMYNPAGPAPGPAPSPMVMGNNTVFMNPYMYNMNPQGSCSFGTPIPMYPPYQYQYQYQYNTQYHSGPYSNTPSYNSNNYTRSSANKYHHFQGKNSYSGAIPKRSDDSNSNKNEGIRRASVEGSPSSRDTDSVEMKFDKLNI.

Residues 26–88 (RIFIIELENS…SCVILFKGEN (63 aa)) form the R3H domain. 3 disordered regions span residues 142–181 (IDGN…IEKE), 195–291 (LNKS…NGGY), and 406–457 (FQGK…KLNI). A compositionally biased stretch (polar residues) spans 145–158 (NTRTPNSNLTANSN). The segment covering 159–181 (KDQKIEIDDKSSTDLEQERIEKE) has biased composition (basic and acidic residues). S198 is subject to Phosphoserine. Low complexity predominate over residues 226–247 (SNTQTSNGSVSSSSPFNSSVTT). The span at 248 to 258 (IQVNKPQQQFY) shows a compositional bias: polar residues. A compositionally biased stretch (basic and acidic residues) spans 418–435 (KRSDDSNSNKNEGIRRAS). Phosphoserine is present on residues S435, S439, and S447. Basic and acidic residues predominate over residues 443-457 (RDTDSVEMKFDKLNI).

It localises to the cytoplasm. The sequence is that of RNA-binding suppressor of PAS kinase protein 1 (RBS1) from Saccharomyces cerevisiae (strain ATCC 204508 / S288c) (Baker's yeast).